Consider the following 563-residue polypeptide: NAD(P)H-quinone oxidoreductase chain 4 (563 aa).

15 helical membrane-spanning segments follow: residues 25–45, 56–76, 90–110, 111–131, 133–153, 157–177, 189–209, 230–250, 264–284, 298–318, 335–355, 356–376, 397–417, 438–458, and 485–505; these read FPWLSLSILFPIVGAFLVPFI, WFALGIALVTFVITVAAYLYG, VSWLPDLGLTWAVGADGISMP, LILLTSFITALAVLAAWPVTF, PKLFFFLILAMDGGQIAVFAV, LLFFLAWELELLPVYLLLAIW, FIIYTAGSSLFILLVALAMGF, GFQLLCYAGLLIAFGVKLPIV, TAPVHMLLAGILLKMGGYALM, FAPLLIVLGVVNIIYAALTSF, MGFVLIGIGSFSALGTSGAML, QMISHGLIGASLFFLVGATYD, FALWTVCALASLALPGMSGFV, IVIAGLAAIGVILTPIYLLSM, and VYIISCLLVPIIGIGLYPRLM.

Belongs to the complex I subunit 4 family.

It is found in the cellular thylakoid membrane. The catalysed reaction is a plastoquinone + NADH + (n+1) H(+)(in) = a plastoquinol + NAD(+) + n H(+)(out). The enzyme catalyses a plastoquinone + NADPH + (n+1) H(+)(in) = a plastoquinol + NADP(+) + n H(+)(out). In terms of biological role, NDH-1 shuttles electrons from NAD(P)H, via FMN and iron-sulfur (Fe-S) centers, to quinones in the respiratory chain. The immediate electron acceptor for the enzyme in this species is believed to be plastoquinone. Couples the redox reaction to proton translocation (for every two electrons transferred, four hydrogen ions are translocated across the cytoplasmic membrane), and thus conserves the redox energy in a proton gradient. The chain is NAD(P)H-quinone oxidoreductase chain 4 from Prochlorococcus marinus (strain MIT 9303).